We begin with the raw amino-acid sequence, 560 residues long: Zinc finger protein 619 (560 aa).

10 consecutive C2H2-type zinc fingers follow at residues 188–210 (YKCG…QRVH), 216–238 (YTCK…QKIH), 244–266 (YSCE…QKLH), 272–294 (YECT…QRIH), 300–322 (FKCK…ERIH), 328–350 (YECK…QRIH), 356–378 (YECK…QRFH), 384–406 (YKCN…QRIH), 412–434 (YECQ…QRVH), and 440–462 (YECK…QKWH).

It belongs to the krueppel C2H2-type zinc-finger protein family.

It localises to the nucleus. May be involved in transcriptional regulation. The polypeptide is Zinc finger protein 619 (ZNF619) (Homo sapiens (Human)).